Here is a 501-residue protein sequence, read N- to C-terminus: Ribose import ATP-binding protein RbsA (501 aa).

ABC transporter domains are found at residues 5 to 241 and 252 to 495; these read LQLK…VGRK and APGE…VGKL. An ATP-binding site is contributed by 37 to 44; sequence GENGAGKS.

The protein belongs to the ABC transporter superfamily. Ribose importer (TC 3.A.1.2.1) family. In terms of assembly, the complex is composed of an ATP-binding protein (RbsA), two transmembrane proteins (RbsC) and a solute-binding protein (RbsB).

The protein resides in the cell inner membrane. It catalyses the reaction D-ribose(out) + ATP + H2O = D-ribose(in) + ADP + phosphate + H(+). Functionally, part of the ABC transporter complex RbsABC involved in ribose import. Responsible for energy coupling to the transport system. The polypeptide is Ribose import ATP-binding protein RbsA (Salmonella typhi).